Reading from the N-terminus, the 429-residue chain is Histidine--tRNA ligase (429 aa).

It belongs to the class-II aminoacyl-tRNA synthetase family. Homodimer.

The protein resides in the cytoplasm. It carries out the reaction tRNA(His) + L-histidine + ATP = L-histidyl-tRNA(His) + AMP + diphosphate + H(+). In Pseudomonas syringae pv. syringae (strain B728a), this protein is Histidine--tRNA ligase.